The primary structure comprises 97 residues: Large ribosomal subunit protein bL27 (97 aa).

A disordered region spans residues 14–36 (HKKGGGSTSNGRDSQAKRLGAKA).

This sequence belongs to the bacterial ribosomal protein bL27 family.

The protein is Large ribosomal subunit protein bL27 of Streptococcus sanguinis (strain SK36).